The chain runs to 367 residues: High osmolarity signaling protein SHO1 (367 aa).

Residues 1-32 (MSISSKIRPTPRKPSRMATDHSFKMKNFYADP) are Cytoplasmic-facing. A helical membrane pass occupies residues 33–53 (FAISSISLAIVSWVIAIGGSI). Topologically, residues 54–65 (SSASTNESFPRF) are extracellular. N59 carries an N-linked (GlcNAc...) asparagine glycan. Residues 66-86 (TWWGIVYQFLTICSLMLFYCF) traverse the membrane as a helical segment. At 87–93 (DLVDHYR) the chain is on the cytoplasmic side. A helical transmembrane segment spans residues 94–114 (IFITTSIAVAFVYNTNSATNL). At 115–122 (VYADGSKK) the chain is on the extracellular side. The chain crosses the membrane as a helical span at residues 123 to 143 (AAASAGVILLSIINLIWILYY). Topologically, residues 144–367 (GGDNASPTNR…LIDGPEEMHR (224 aa)) are cytoplasmic. S166 is subject to Phosphoserine. The interval 253–276 (NAKETNDNSNNQTNTNIGNTFDTD) is disordered. Residues 259–272 (DNSNNQTNTNIGNT) are compositionally biased toward low complexity. One can recognise an SH3 domain in the interval 300–361 (NFIYKAKALY…PSNYVQLIDG (62 aa)).

The protein belongs to the SHO1 family. As to quaternary structure, forms homooligomers. Interacts (via the SH3 domain) with PBS2. Interacts with FUS1, STE11, STE50 and RNA polymerase II.

It localises to the cell membrane. The protein resides in the bud. The protein localises to the bud neck. Its subcellular location is the cell projection. Plasma membrane osmosensor that activates the high osmolarity glycerol (HOG) MAPK signaling pathway in response to high osmolarity. Detects changes in external osmolarity and activates PBS2 through the stimulation of STE11 and targets PBS2 to the plasma membrane. PBS2 activation leads to changes in glycerol production that helps to balance the intracellular and external osmotic pressures. Activates also HOG1 in response to heat stress and mediates resistance to oxidative stress. Involved in the regulation of the mating pathway. May be a receptor that feeds into the pseudohyphal growth pathway. This is High osmolarity signaling protein SHO1 (SHO1) from Saccharomyces cerevisiae (strain YJM789) (Baker's yeast).